The chain runs to 410 residues: Translation initiation factor 2 subunit gamma (410 aa).

The 198-residue stretch at 6 to 203 (QSEVNIGMVG…AIQEFIPTPK (198 aa)) folds into the tr-type G domain. The G1 stretch occupies residues 15-22 (GHVDHGKT). Residues D18, T22, G43, and S45 each coordinate Mg(2+). 18–23 (DHGKTS) is a GTP binding site. The interval 43–47 (GISIR) is G2. 4 residues coordinate Zn(2+): C58, C61, C73, and C76. The segment at 90-93 (DAPG) is G3. GTP-binding positions include 146–149 (NKID) and 181–183 (SAH). The G4 stretch occupies residues 146–149 (NKID). Residues 181-183 (SAH) are G5.

It belongs to the TRAFAC class translation factor GTPase superfamily. Classic translation factor GTPase family. EIF2G subfamily. In terms of assembly, heterotrimer composed of an alpha, a beta and a gamma chain. Mg(2+) is required as a cofactor.

It catalyses the reaction GTP + H2O = GDP + phosphate + H(+). In terms of biological role, eIF-2 functions in the early steps of protein synthesis by forming a ternary complex with GTP and initiator tRNA. In Methanococcus vannielii (strain ATCC 35089 / DSM 1224 / JCM 13029 / OCM 148 / SB), this protein is Translation initiation factor 2 subunit gamma.